We begin with the raw amino-acid sequence, 270 residues long: SAMP-activating enzyme E1 (270 aa).

Residues Gly42, Asp63, Ser70–Arg74, and Lys87 contribute to the ATP site. Residue Lys113 forms a Glycyl lysine isopeptide (Lys-Gly) (interchain with G-Cter in SAMP2) linkage. Asp131–Asn132 contributes to the ATP binding site. Zn(2+)-binding residues include Cys171 and Cys174. Cys188 functions as the Glycyl thioester intermediate in the catalytic mechanism. The Zn(2+) site is built by Cys245 and Cys248.

This sequence belongs to the HesA/MoeB/ThiF family. In terms of assembly, interacts with NcsA. Zn(2+) is required as a cofactor. Sampylated at Lys-113 with the archaeal ubiquitin-like protein SAMP2. Also sampylated with SAMP1.

The catalysed reaction is [small archaeal modifier protein]-C-terminal Gly-Gly + ATP + H(+) = [small archaeal modifier protein]-C-terminal Gly-Gly-AMP + diphosphate. Likely activates multiple ubiquitin-like SAMPs for protein conjugation as well as for sulfur transfer, via ATP-dependent adenylation at their C-terminus. In fact, it is required for the formation of all three SAMP1-, SAMP2- and SAMP3-protein conjugates, and for molybdenum cofactor (MoCo) biosynthesis and thiolation of tRNAs. In Haloferax volcanii (strain ATCC 29605 / DSM 3757 / JCM 8879 / NBRC 14742 / NCIMB 2012 / VKM B-1768 / DS2) (Halobacterium volcanii), this protein is SAMP-activating enzyme E1 (ubaA).